We begin with the raw amino-acid sequence, 318 residues long: BES1/BZR1 homolog protein 2 (318 aa).

Gly residues predominate over residues 1–13; the sequence is MAAGGGGGGGGSS. Disordered regions lie at residues 1–34, 84–133, 166–195, and 209–231; these read MAAG…RRRR, FKPP…PSPS, NSAP…PNGG, and APSS…CDES. The interval 16-97 is required for DNA-binding; that stretch reads RTPTWKEREN…ASDISGTPTN (82 aa). Residues 91-101 are compositionally biased toward polar residues; that stretch reads ISGTPTNFSTN. The span at 102-133 shows a compositional bias: low complexity; sequence SSIQPSPQSSAFPSPAPSYHGSPVSSSFPSPS.

Belongs to the BZR/LAT61 family. Post-translationally, phosphorylated. Phosphorylation increases protein degradation.

The sequence is that of BES1/BZR1 homolog protein 2 (BEH2) from Arabidopsis thaliana (Mouse-ear cress).